A 1295-amino-acid chain; its full sequence is Phosphoribosylformylglycinamidine synthase (1295 aa).

The interval 305 to 327 (WPGAATGSGGEIRDEGATGRGAK) is disordered. ATP-binding positions include 307–318 (GAATGSGGEIRD) and A678. Mg(2+) is bound by residues E718, N722, and D884. S886 contacts ATP. Positions 1042 to 1295 (VAVLREQGVN…IFRNARKQLG (254 aa)) constitute a Glutamine amidotransferase type-1 domain. C1135 serves as the catalytic Nucleophile. Active-site residues include H1260 and E1262.

The protein in the N-terminal section; belongs to the FGAMS family. In terms of assembly, monomer. In terms of processing, both N-terminus methionine truncation and retention have been observed for this protein.

Its subcellular location is the cytoplasm. The catalysed reaction is N(2)-formyl-N(1)-(5-phospho-beta-D-ribosyl)glycinamide + L-glutamine + ATP + H2O = 2-formamido-N(1)-(5-O-phospho-beta-D-ribosyl)acetamidine + L-glutamate + ADP + phosphate + H(+). Its pathway is purine metabolism; IMP biosynthesis via de novo pathway; 5-amino-1-(5-phospho-D-ribosyl)imidazole from N(2)-formyl-N(1)-(5-phospho-D-ribosyl)glycinamide: step 1/2. Its function is as follows. Phosphoribosylformylglycinamidine synthase involved in the purines biosynthetic pathway. Catalyzes the ATP-dependent conversion of formylglycinamide ribonucleotide (FGAR) and glutamine to yield formylglycinamidine ribonucleotide (FGAM) and glutamate. This is Phosphoribosylformylglycinamidine synthase from Escherichia coli (strain K12).